We begin with the raw amino-acid sequence, 119 residues long: MSESLHALARQLEQAIRASQPFQQLKQAYEDVRRDETAYQMFANFRDIQLRLHEKQMRGAAILPDEIEQAQKAMALAQQNAKLARLMALEQQMSMTIAEVQQIAMKPLEELHRSLMEEK.

Belongs to the UPF0342 family.

This chain is UPF0342 protein GTNG_0551, found in Geobacillus thermodenitrificans (strain NG80-2).